The sequence spans 372 residues: L-selectin (372 aa).

The signal sequence occupies residues 1-28; the sequence is MIFPWKCQSTQRDLWNIFKLWGWTMLCC. A propeptide spanning residues 29 to 38 is cleaved from the precursor; the sequence is DFLAHHGTDC. The Extracellular portion of the chain corresponds to 39 to 332; sequence WTYHYSEKPM…FSMIKEGDYN (294 aa). Residues 55–155 enclose the C-type lectin domain; that stretch reads RFCRDNYTDL…ACHKLKAALC (101 aa). 10 disulfides stabilise this stretch: Cys-57/Cys-155, Cys-128/Cys-147, Cys-128/Cys-160, Cys-160/Cys-171, Cys-165/Cys-180, Cys-182/Cys-191, Cys-197/Cys-241, Cys-227/Cys-254, Cys-259/Cys-303, and Cys-289/Cys-316. N-linked (GlcNAc...) asparagine glycans are attached at residues Asn-60 and Asn-104. The Ca(2+) site is built by Glu-118, Asn-120, Glu-126, Asn-143, and Asp-144. One can recognise an EGF-like domain in the interval 156-192; that stretch reads YTASCQPWSCSGHGECVEIINNYTCNCDVGYYGPQCQ. Residue Asn-177 is glycosylated (N-linked (GlcNAc...) asparagine). Sushi domains lie at 195–256 and 257–318; these read IQCE…TCQV and IQCE…ICQK. Residues Asn-216, Asn-232, Asn-246, and Asn-271 are each glycosylated (N-linked (GlcNAc...) asparagine). The helical transmembrane segment at 333–355 threads the bilayer; it reads PLFIPVAVMVTAFSGLAFIIWLA. Topologically, residues 356-372 are cytoplasmic; the sequence is RRLKKGKKSKRSMDDPY.

This sequence belongs to the selectin/LECAM family. In terms of assembly, interaction with SELPLG/PSGL1 and PODXL2 is required for promoting recruitment and rolling of leukocytes. This interaction is dependent on the sialyl Lewis X glycan modification of SELPLG and PODXL2, and tyrosine sulfation modifications of SELPLG. Sulfation on 'Tyr-51' of SELPLG is important for L-selectin binding. In terms of processing, N-glycosylated.

The protein resides in the cell membrane. In terms of biological role, calcium-dependent lectin that mediates cell adhesion by binding to glycoproteins on neighboring cells. Mediates the adherence of lymphocytes to endothelial cells of high endothelial venules in peripheral lymph nodes. Promotes initial tethering and rolling of leukocytes in endothelia. This chain is L-selectin (SELL), found in Pan troglodytes (Chimpanzee).